The primary structure comprises 279 residues: Putative polysaccharide deacetylase YxkH (279 aa).

The N-terminal stretch at 1-19 (MKRLFLSIFLLGSCLALAA) is a signal peptide. Cys-20 carries the N-palmitoyl cysteine lipid modification. Cys-20 is lipidated: S-diacylglycerol cysteine. Residues 29 to 51 (QPMPKAEQKKPEKKAVQVQKKED) form a disordered region. Basic and acidic residues predominate over residues 34–51 (AEQKKPEKKAVQVQKKED). The region spanning 119–279 (KCVLITFDDG…AFGAYIESMK (161 aa)) is the NodB homology domain.

This sequence belongs to the polysaccharide deacetylase family.

The protein resides in the cell membrane. The protein is Putative polysaccharide deacetylase YxkH (yxkH) of Bacillus subtilis (strain 168).